A 318-amino-acid chain; its full sequence is COP9 signalosome complex subunit 6 (318 aa).

The MPN domain maps to 32–165 (VALHPLVILN…VSVYESVIDI (134 aa)).

It belongs to the peptidase M67A family. CSN6 subfamily. In terms of assembly, component of the CSN complex, probably composed of cops1, cops2, cops3, cops4, cops5, cops6, cops7, cops8 and cops9.

It localises to the cytoplasm. The protein resides in the nucleus. In terms of biological role, component of the COP9 signalosome complex (CSN), a complex involved in various cellular and developmental processes. The CSN complex is an essential regulator of the ubiquitin (Ubl) conjugation pathway by mediating the deneddylation of the cullin subunits of E3 ligase complexes, leading to modify the Ubl ligase activity. The protein is COP9 signalosome complex subunit 6 (cops6) of Xenopus laevis (African clawed frog).